A 393-amino-acid polypeptide reads, in one-letter code: Xyloside xylosyltransferase 1 (393 aa).

Topologically, residues 1–23 are cytoplasmic; sequence MGLLRGGLPCARAMARLGAVRSH. A helical; Signal-anchor for type II membrane protein transmembrane segment spans residues 24 to 44; sequence YCALLLAAALAVCAFYYLGSG. Topologically, residues 45-393 are lumenal; that stretch reads RETFSSATKR…GNCNTPIPED (349 aa). 104-106 contributes to the UDP-alpha-D-xylose binding site; it reads MFT. Mn(2+) is bound at residue Asp-226. Leu-227 provides a ligand contact to UDP-alpha-D-xylose. Asp-228 contributes to the Mn(2+) binding site. Residues 263 to 266 are interaction with target proteins; the sequence is HTFW. Ser-290, Leu-328, and Gln-331 together coordinate UDP-alpha-D-xylose. Residues Gln-331 and Trp-360 each contribute to the a glycoprotein site. Cystine bridges form between Cys-350–Cys-375 and Cys-357–Cys-386. His-383 is a binding site for Mn(2+). Asn-385 serves as a coordination point for a glycoprotein.

It belongs to the glycosyltransferase 8 family. As to quaternary structure, homodimer. Dimer formation may be essential for the retention in endoplasmic reticulum. Mg(2+) serves as cofactor. The cofactor is Mn(2+).

It is found in the endoplasmic reticulum membrane. The enzyme catalyses 3-O-[alpha-D-xylosyl-(1-&gt;3)-beta-D-glucosyl]-L-seryl-[EGF-like domain protein] + UDP-alpha-D-xylose = 3-O-[alpha-D-xylosyl-(1-&gt;3)-alpha-D-xylosyl-(1-&gt;3)-beta-D-glucosyl]-L-seryl-[EGF-like domain protein] + UDP + H(+). Its function is as follows. Alpha-1,3-xylosyltransferase, which elongates the O-linked xylose-glucose disaccharide attached to EGF-like repeats in the extracellular domain of target proteins by catalyzing the addition of the second xylose. Known targets include Notch proteins and coagulation factors, such as F9. The protein is Xyloside xylosyltransferase 1 (XXYLT1) of Homo sapiens (Human).